A 792-amino-acid polypeptide reads, in one-letter code: Cadherin-11 (792 aa).

The N-terminal stretch at 1 to 22 (MKEDNCLHAALICLGMLYYSHA) is a signal peptide. Positions 23–53 (ITTEKLNHVRPSLHGHHEKGKEGQVLHRSKR) are excised as a propeptide. Cadherin domains are found at residues 54 to 159 (GWVW…PPEF), 160 to 268 (LHEN…PPKF), 269 to 383 (PQSV…PPVF), 384 to 486 (LKPS…DNAP), and 487 to 608 (KFAA…YILN). At 54–613 (GWVWNQFFVI…AYILNAGLST (560 aa)) the chain is on the extracellular side. N-linked (GlcNAc...) asparagine glycosylation is found at Asn-455, Asn-536, and Asn-594. The helical transmembrane segment at 614–634 (GALIAILACIVILLVIVVLFV) threads the bilayer. Topologically, residues 635 to 792 (TLKRQKKEPL…GSKDTFDDDS (158 aa)) are cytoplasmic.

The protein localises to the cell membrane. Cadherins are calcium-dependent cell adhesion proteins. They preferentially interact with themselves in a homophilic manner in connecting cells; cadherins may thus contribute to the sorting of heterogeneous cell types. Required for proper focal adhesion assembly. Involved in the regulation of cell migration. The polypeptide is Cadherin-11 (CDH11) (Gallus gallus (Chicken)).